Reading from the N-terminus, the 103-residue chain is Pyrimidine/purine nucleoside phosphorylase (103 aa).

The protein belongs to the nucleoside phosphorylase PpnP family.

The catalysed reaction is a purine D-ribonucleoside + phosphate = a purine nucleobase + alpha-D-ribose 1-phosphate. The enzyme catalyses adenosine + phosphate = alpha-D-ribose 1-phosphate + adenine. It carries out the reaction cytidine + phosphate = cytosine + alpha-D-ribose 1-phosphate. It catalyses the reaction guanosine + phosphate = alpha-D-ribose 1-phosphate + guanine. The catalysed reaction is inosine + phosphate = alpha-D-ribose 1-phosphate + hypoxanthine. The enzyme catalyses thymidine + phosphate = 2-deoxy-alpha-D-ribose 1-phosphate + thymine. It carries out the reaction uridine + phosphate = alpha-D-ribose 1-phosphate + uracil. It catalyses the reaction xanthosine + phosphate = alpha-D-ribose 1-phosphate + xanthine. Catalyzes the phosphorolysis of diverse nucleosides, yielding D-ribose 1-phosphate and the respective free bases. Can use uridine, adenosine, guanosine, cytidine, thymidine, inosine and xanthosine as substrates. Also catalyzes the reverse reactions. The chain is Pyrimidine/purine nucleoside phosphorylase from Shewanella denitrificans (strain OS217 / ATCC BAA-1090 / DSM 15013).